Consider the following 654-residue polypeptide: 4-hydroxy-3-methylbut-2-en-1-yl diphosphate synthase (flavodoxin) (654 aa).

Residues Cys-557, Cys-560, Cys-591, and Glu-598 each contribute to the [4Fe-4S] cluster site.

The protein belongs to the IspG family. It depends on [4Fe-4S] cluster as a cofactor.

The enzyme catalyses (2E)-4-hydroxy-3-methylbut-2-enyl diphosphate + oxidized [flavodoxin] + H2O + 2 H(+) = 2-C-methyl-D-erythritol 2,4-cyclic diphosphate + reduced [flavodoxin]. It participates in isoprenoid biosynthesis; isopentenyl diphosphate biosynthesis via DXP pathway; isopentenyl diphosphate from 1-deoxy-D-xylulose 5-phosphate: step 5/6. Converts 2C-methyl-D-erythritol 2,4-cyclodiphosphate (ME-2,4cPP) into 1-hydroxy-2-methyl-2-(E)-butenyl 4-diphosphate. This chain is 4-hydroxy-3-methylbut-2-en-1-yl diphosphate synthase (flavodoxin), found in Protochlamydia amoebophila (strain UWE25).